The chain runs to 970 residues: mRNA-decapping enzyme subunit 2 (970 aa).

A Nudix hydrolase domain is found at 101-228; sequence KSIPVRGAAI…IKYYLINSMM (128 aa). Position 116 is a phosphoserine (Ser116). The Nudix box signature appears at 134-155; the sequence is GKISKDENDIDCCIREVKEEIG. Residues Glu149 and Glu153 each coordinate Mn(2+). Disordered stretches follow at residues 287 to 341, 417 to 465, and 499 to 692; these read NNAV…ANNK, AVSQ…PKLK, and PTSS…LSST. The span at 300 to 314 shows a compositional bias: basic and acidic residues; the sequence is EHQHLKEQSGEHNQQ. The span at 315-334 shows a compositional bias: low complexity; the sequence is KDQQSSFSSQQQPSIFPSLS. Ser439 bears the Phosphoserine mark. Polar residues predominate over residues 499–522; sequence PTSSQKTHASKPDTSFLPNDSVSG. Residues 526 to 539 are compositionally biased toward acidic residues; sequence AEYEDFESSSDEEV. The span at 560–576 shows a compositional bias: basic and acidic residues; it reads SEKDSRRSQKEKPRSDA. Residues 577 to 590 show a composition bias toward polar residues; it reads NKTNLNASAESNSV. Over residues 596–608 the composition is skewed to low complexity; sequence KSSPSTQSKQNSS. Residues 625 to 637 show a composition bias toward acidic residues; sequence DAYEVFESSSDEE. Thr677 carries the post-translational modification Phosphothreonine. Over residues 677–691 the composition is skewed to polar residues; sequence TESNKSINETVGLSS. Ser679, Ser682, Ser751, Ser771, Ser773, and Ser778 each carry phosphoserine. The interval 831-862 is disordered; the sequence is LKKNNSTGYPRTEGGPSSEMPTSMKRNDATNN.

It belongs to the Nudix hydrolase family. DCP2 subfamily. In terms of assembly, component of the decapping complex composed of DCP1 and DCP2. Interacts with mRNA, LSM2, LSM4 and LSM8. Mn(2+) is required as a cofactor.

It localises to the cytoplasm. The protein resides in the P-body. Functionally, catalytic component of the decapping complex necessary for the degradation of mRNAs, both in normal mRNA turnover and in nonsense-mediated mRNA decay. Removes the 7-methyl guanine cap structure from mRNA molecules, yielding a 5'-phosphorylated mRNA fragment and 7m-GDP. Decapping is the major pathway of mRNA degradation in yeast. It occurs through deadenylation, decapping and subsequent 5' to 3' exonucleolytic decay of the transcript body. This is mRNA-decapping enzyme subunit 2 (DCP2) from Saccharomyces cerevisiae (strain YJM789) (Baker's yeast).